Reading from the N-terminus, the 271-residue chain is 3-methyl-2-oxobutanoate hydroxymethyltransferase (271 aa).

Residues aspartate 51 and aspartate 90 each coordinate Mg(2+). Residues 51–52 (DS), aspartate 90, and lysine 118 each bind 3-methyl-2-oxobutanoate. Residue glutamate 120 coordinates Mg(2+). The active-site Proton acceptor is the glutamate 186.

The protein belongs to the PanB family. As to quaternary structure, homodecamer; pentamer of dimers. The cofactor is Mg(2+).

The protein localises to the cytoplasm. The catalysed reaction is 3-methyl-2-oxobutanoate + (6R)-5,10-methylene-5,6,7,8-tetrahydrofolate + H2O = 2-dehydropantoate + (6S)-5,6,7,8-tetrahydrofolate. It functions in the pathway cofactor biosynthesis; (R)-pantothenate biosynthesis; (R)-pantoate from 3-methyl-2-oxobutanoate: step 1/2. Catalyzes the reversible reaction in which hydroxymethyl group from 5,10-methylenetetrahydrofolate is transferred onto alpha-ketoisovalerate to form ketopantoate. The protein is 3-methyl-2-oxobutanoate hydroxymethyltransferase of Xanthomonas campestris pv. campestris (strain 8004).